A 510-amino-acid polypeptide reads, in one-letter code: Ribonuclease Y (510 aa).

The helical transmembrane segment at L4–Y24 threads the bilayer. The KH domain maps to T200 to L260. Residues V326–A419 form the HD domain.

The protein belongs to the RNase Y family.

It is found in the cell membrane. Endoribonuclease that initiates mRNA decay. The chain is Ribonuclease Y from Chloroflexus aurantiacus (strain ATCC 29366 / DSM 635 / J-10-fl).